A 447-amino-acid chain; its full sequence is GTPase Der (447 aa).

EngA-type G domains follow at residues 4–165 and 180–357; these read QIIT…PEEE and LQIV…KIWN. GTP contacts are provided by residues 10-17, 57-61, 119-122, 186-193, 233-237, and 298-301; these read GRPNVGKS, DTPGL, NKCE, GRPNAGKS, DTAGL, and NKWD. A KH-like domain is found at 358-443; sequence KKITTSKLNE…PIRFTYVKTK (86 aa).

This sequence belongs to the TRAFAC class TrmE-Era-EngA-EngB-Septin-like GTPase superfamily. EngA (Der) GTPase family. As to quaternary structure, associates with the 50S ribosomal subunit.

Functionally, GTPase that plays an essential role in the late steps of ribosome biogenesis. This is GTPase Der from Rickettsia rickettsii (strain Iowa).